The following is a 330-amino-acid chain: Ketol-acid reductoisomerase (NADP(+)) (330 aa).

The region spanning 2 to 182 (ARMYYDADAN…GGTRAGILET (181 aa)) is the KARI N-terminal Rossmann domain. Residues 25-28 (YGSQ), serine 51, serine 53, and 83-86 (DEFQ) each bind NADP(+). Histidine 108 is an active-site residue. Glycine 134 is a binding site for NADP(+). Residues 183 to 328 (SFREETETDL…KDLRAMFSWL (146 aa)) enclose the KARI C-terminal knotted domain. Mg(2+)-binding residues include aspartate 191, glutamate 195, glutamate 227, and glutamate 231. Position 252 (serine 252) interacts with substrate.

The protein belongs to the ketol-acid reductoisomerase family. Mg(2+) is required as a cofactor.

The catalysed reaction is (2R)-2,3-dihydroxy-3-methylbutanoate + NADP(+) = (2S)-2-acetolactate + NADPH + H(+). The enzyme catalyses (2R,3R)-2,3-dihydroxy-3-methylpentanoate + NADP(+) = (S)-2-ethyl-2-hydroxy-3-oxobutanoate + NADPH + H(+). The protein operates within amino-acid biosynthesis; L-isoleucine biosynthesis; L-isoleucine from 2-oxobutanoate: step 2/4. It participates in amino-acid biosynthesis; L-valine biosynthesis; L-valine from pyruvate: step 2/4. Functionally, involved in the biosynthesis of branched-chain amino acids (BCAA). Catalyzes an alkyl-migration followed by a ketol-acid reduction of (S)-2-acetolactate (S2AL) to yield (R)-2,3-dihydroxy-isovalerate. In the isomerase reaction, S2AL is rearranged via a Mg-dependent methyl migration to produce 3-hydroxy-3-methyl-2-ketobutyrate (HMKB). In the reductase reaction, this 2-ketoacid undergoes a metal-dependent reduction by NADPH to yield (R)-2,3-dihydroxy-isovalerate. The polypeptide is Ketol-acid reductoisomerase (NADP(+)) (Synechococcus elongatus (strain ATCC 33912 / PCC 7942 / FACHB-805) (Anacystis nidulans R2)).